Consider the following 681-residue polypeptide: PTS system glucose-specific EIICBA component (681 aa).

The PTS EIIC type-1 domain maps to 3–414 (KKLFGQLQRI…LKYKTPGRED (412 aa)). Transmembrane regions (helical) follow at residues 16–36 (LMLP…GTAM), 73–93 (MIFA…AAIA), 126–146 (ILGI…GALA), 170–190 (FVPI…ALIW), 199–219 (AFST…FGFI), 273–293 (FMQG…LAIY), 303–323 (VVAG…ITEP), 328–348 (FLFV…LSFL), 355–375 (LHLG…GILP), and 383–403 (VIPV…FLIV). Residues 425-506 (TELPYAVLEA…QQIMNGQVVE (82 aa)) enclose the PTS EIIB type-1 domain. C447 acts as the Phosphocysteine intermediate; for EIIB activity in catalysis. In terms of domain architecture, PTS EIIA type-1 spans 551–655 (DQVFSEKMMG…SDITPIIVTQ (105 aa)). H603 functions as the Tele-phosphohistidine intermediate; for EIIA activity in the catalytic mechanism.

The protein localises to the cell membrane. It catalyses the reaction N(pros)-phospho-L-histidyl-[protein] + D-glucose(out) = D-glucose 6-phosphate(in) + L-histidyl-[protein]. In terms of biological role, the phosphoenolpyruvate-dependent sugar phosphotransferase system (sugar PTS), a major carbohydrate active transport system, catalyzes the phosphorylation of incoming sugar substrates concomitantly with their translocation across the cell membrane. This system is involved in glucose transport. The sequence is that of PTS system glucose-specific EIICBA component (ptsG) from Staphylococcus aureus (strain NCTC 8325 / PS 47).